Here is a 280-residue protein sequence, read N- to C-terminus: MGLKDFVDKLKNIKKSRIKIEEGAWIKCDKCKNILYIEDLLKNLKICPHCGYTFRMNAKERVDSLLDKVYSYDLFPKIKPVDIIGFKDTKRYKDRLKEAQEKTGLNDAIIIAHGNIYDREVVLASMDFNFMGGSMGSVVGAKFVRGVEFAIEKSIPFISVAASGGARMQESIVSLMQMAKTAIAIDRLNKAGILYISVLTDPTMGGVSASFAFLGDIIIAEPESLIGFAGPRVIEQTIRQQLPEGFQRAEFLLEKGQIDMVVDRKNLKKTIYTLIRHTHG.

In terms of domain architecture, CoA carboxyltransferase N-terminal spans 24–280; it reads AWIKCDKCKN…IYTLIRHTHG (257 aa). Positions 28, 31, 47, and 50 each coordinate Zn(2+). A C4-type zinc finger spans residues 28–50; that stretch reads CDKCKNILYIEDLLKNLKICPHC.

The protein belongs to the AccD/PCCB family. In terms of assembly, acetyl-CoA carboxylase is a heterohexamer composed of biotin carboxyl carrier protein (AccB), biotin carboxylase (AccC) and two subunits each of ACCase subunit alpha (AccA) and ACCase subunit beta (AccD). Requires Zn(2+) as cofactor.

Its subcellular location is the cytoplasm. It catalyses the reaction N(6)-carboxybiotinyl-L-lysyl-[protein] + acetyl-CoA = N(6)-biotinyl-L-lysyl-[protein] + malonyl-CoA. The protein operates within lipid metabolism; malonyl-CoA biosynthesis; malonyl-CoA from acetyl-CoA: step 1/1. In terms of biological role, component of the acetyl coenzyme A carboxylase (ACC) complex. Biotin carboxylase (BC) catalyzes the carboxylation of biotin on its carrier protein (BCCP) and then the CO(2) group is transferred by the transcarboxylase to acetyl-CoA to form malonyl-CoA. This Sulfurihydrogenibium sp. (strain YO3AOP1) protein is Acetyl-coenzyme A carboxylase carboxyl transferase subunit beta.